The chain runs to 397 residues: Acetate kinase (397 aa).

N7 contributes to the Mg(2+) binding site. Residue K14 coordinates ATP. R90 provides a ligand contact to substrate. Residue D147 is the Proton donor/acceptor of the active site. Residues 207–211 (HLGNG), 282–284 (DFR), and 330–334 (GLGEN) each bind ATP. E383 contributes to the Mg(2+) binding site.

Belongs to the acetokinase family. Homodimer. Mg(2+) is required as a cofactor. The cofactor is Mn(2+).

It localises to the cytoplasm. It carries out the reaction acetate + ATP = acetyl phosphate + ADP. Its pathway is metabolic intermediate biosynthesis; acetyl-CoA biosynthesis; acetyl-CoA from acetate: step 1/2. Catalyzes the formation of acetyl phosphate from acetate and ATP. Can also catalyze the reverse reaction. This Clostridium botulinum (strain Langeland / NCTC 10281 / Type F) protein is Acetate kinase.